The sequence spans 232 residues: Small ribosomal subunit protein uS3 (232 aa).

Positions 39-107 (VRQYLTKALK…PAQINIAEVR (69 aa)) constitute a KH type-2 domain.

It belongs to the universal ribosomal protein uS3 family. As to quaternary structure, part of the 30S ribosomal subunit. Forms a tight complex with proteins S10 and S14.

Functionally, binds the lower part of the 30S subunit head. Binds mRNA in the 70S ribosome, positioning it for translation. The chain is Small ribosomal subunit protein uS3 from Pseudoalteromonas atlantica (strain T6c / ATCC BAA-1087).